Consider the following 646-residue polypeptide: Chaperone protein DnaK (646 aa).

A Phosphothreonine; by autocatalysis modification is found at T197. The segment at 599–646 (QQGAQAGADPNAGSSQGAQAGTDYGTSGPKTGTADDVDYEVVNDDNDK) is disordered. Positions 610 to 628 (AGSSQGAQAGTDYGTSGPK) are enriched in polar residues. A compositionally biased stretch (acidic residues) spans 633–646 (DDVDYEVVNDDNDK).

The protein belongs to the heat shock protein 70 family.

Functionally, acts as a chaperone. In Treponema denticola (strain ATCC 35405 / DSM 14222 / CIP 103919 / JCM 8153 / KCTC 15104), this protein is Chaperone protein DnaK.